We begin with the raw amino-acid sequence, 335 residues long: MELSCPGSRCPVQEQRARWERKRACTARELLETERRYQEQLGLVATYFLGILKAKGTLRPPERQALFGSWELIYGASQELLPYLEGGCWGQGLEGFCRHLELYNQFAANSERSQTTLQEQLKKNKGFRRFVRLQEGRPEFGGLQLQDLLPLPLQRLQQYENLVVALAENTGPNSPDHQQLTRAARLISETAQRVHTIGQKQKNDQHLRRVQALLSGRQAKGLTSGRWFLRQGWLLVVPPHGEPRPRMFFLFTDVLLMAKPRPPLHLLRSGTFACKALYPMAQCHLSRVFGHSGGPCGGLLSLSFPHEKLLLMSTDQEELSRWYHSLTWAISSQKN.

The 176-residue stretch at 22 to 197 folds into the DH domain; sequence KRACTARELL…SETAQRVHTI (176 aa). In terms of domain architecture, PH spans 227 to 331; it reads WFLRQGWLLV…WYHSLTWAIS (105 aa).

As to expression, strongly expressed in hepatocellular carcinoma (HCC) compared with their non-cancerous counterparts.

It localises to the cell membrane. Promotes cell proliferation. In Homo sapiens (Human), this protein is Rho guanine nucleotide exchange factor 39 (ARHGEF39).